The following is a 201-amino-acid chain: 3-isopropylmalate dehydratase small subunit (201 aa).

This sequence belongs to the LeuD family. LeuD type 1 subfamily. As to quaternary structure, heterodimer of LeuC and LeuD.

It carries out the reaction (2R,3S)-3-isopropylmalate = (2S)-2-isopropylmalate. It participates in amino-acid biosynthesis; L-leucine biosynthesis; L-leucine from 3-methyl-2-oxobutanoate: step 2/4. Catalyzes the isomerization between 2-isopropylmalate and 3-isopropylmalate, via the formation of 2-isopropylmaleate. This is 3-isopropylmalate dehydratase small subunit from Shewanella sp. (strain MR-4).